We begin with the raw amino-acid sequence, 375 residues long: Pectate lyase B (375 aa).

The first 22 residues, 1-22 (MKSLITPIAAGLLLAFSQYSLA), serve as a signal peptide directing secretion. C93 and C176 are joined by a disulfide. Positions 150, 152, 187, and 191 each coordinate Ca(2+). R240 is a catalytic residue. Residues C351 and C374 are joined by a disulfide bond.

The protein belongs to the polysaccharide lyase 1 family. PLADES subfamily. Ca(2+) is required as a cofactor.

The protein resides in the secreted. It carries out the reaction Eliminative cleavage of (1-&gt;4)-alpha-D-galacturonan to give oligosaccharides with 4-deoxy-alpha-D-galact-4-enuronosyl groups at their non-reducing ends.. It participates in glycan metabolism; pectin degradation; 2-dehydro-3-deoxy-D-gluconate from pectin: step 2/5. Its function is as follows. Involved in maceration and soft-rotting of plant tissue. This Dickeya chrysanthemi (Pectobacterium chrysanthemi) protein is Pectate lyase B (pelB).